The primary structure comprises 308 residues: Aldo-keto reductase AKR2E4 (308 aa).

NADP(+)-binding positions include 22-29 (GTGRGTAK) and D53. Y58 acts as the Proton donor in catalysis. NADP(+) is bound by residues 158–159 (SN), R215, and 259–269 (KSTNKQRIAQN).

It belongs to the short-chain dehydrogenases/reductases (SDR) family. Detected in hemolymph (at protein level). Detected in larval ovary.

With respect to regulation, subject to substrate inhibition by high levels of 3-dehydroecdysone. Functionally, NADP-dependent oxidoreductase with high 3-dehydroecdysone reductase activity. May play a role in the regulation of molting. Has lower activity with phenylglyoxal and isatin (in vitro). Has no activity with NADH as cosubstrate. Has no activity with nitrobenzaldehyde and 3-hydroxybenzaldehyde. The chain is Aldo-keto reductase AKR2E4 (akr2e) from Bombyx mori (Silk moth).